Reading from the N-terminus, the 240-residue chain is Ribonuclease 3 (240 aa).

The RNase III domain maps to 9-141; sequence VEEFQKKTGI…LLAAIYLDQG (133 aa). A Mg(2+)-binding site is contributed by Glu54. Asp58 is an active-site residue. Mg(2+) is bound by residues Asp127 and Glu130. Residue Glu130 is part of the active site. In terms of domain architecture, DRBM spans 168–237; sequence DYKTALQEIV…ARIAYEKLLK (70 aa).

Belongs to the ribonuclease III family. Homodimer. Mg(2+) is required as a cofactor.

Its subcellular location is the cytoplasm. It carries out the reaction Endonucleolytic cleavage to 5'-phosphomonoester.. In terms of biological role, digests double-stranded RNA. Involved in the processing of primary rRNA transcript to yield the immediate precursors to the large and small rRNAs (23S and 16S). Processes some mRNAs, and tRNAs when they are encoded in the rRNA operon. Processes pre-crRNA and tracrRNA of type II CRISPR loci if present in the organism. In Thermotoga petrophila (strain ATCC BAA-488 / DSM 13995 / JCM 10881 / RKU-1), this protein is Ribonuclease 3.